The sequence spans 177 residues: Large ribosomal subunit protein uL10 (177 aa).

The protein belongs to the universal ribosomal protein uL10 family. As to quaternary structure, part of the ribosomal stalk of the 50S ribosomal subunit. The N-terminus interacts with L11 and the large rRNA to form the base of the stalk. The C-terminus forms an elongated spine to which L12 dimers bind in a sequential fashion forming a multimeric L10(L12)X complex.

Forms part of the ribosomal stalk, playing a central role in the interaction of the ribosome with GTP-bound translation factors. This is Large ribosomal subunit protein uL10 from Leptospira interrogans serogroup Icterohaemorrhagiae serovar copenhageni (strain Fiocruz L1-130).